We begin with the raw amino-acid sequence, 423 residues long: RNA polymerase sigma factor SigA (423 aa).

The segment at M1–S76 is disordered. Residues V21 to L70 are compositionally biased toward acidic residues. Residues S78–I113 are sigma-70 factor domain-1. Residues L187 to T257 form a sigma-70 factor domain-2 region. The Interaction with polymerase core subunit RpoC motif lies at D211–Q214. The tract at residues E266–A344 is sigma-70 factor domain-3. Residues A357–K409 are sigma-70 factor domain-4. A DNA-binding region (H-T-H motif) is located at residues L383–N402.

It belongs to the sigma-70 factor family. RpoD/SigA subfamily. As to quaternary structure, interacts transiently with the RNA polymerase catalytic core formed by RpoA, RpoB, RpoC and RpoZ (2 alpha, 1 beta, 1 beta' and 1 omega subunit) to form the RNA polymerase holoenzyme that can initiate transcription.

The protein resides in the cytoplasm. Its function is as follows. Sigma factors are initiation factors that promote the attachment of RNA polymerase to specific initiation sites and are then released. This sigma factor is the primary sigma factor during exponential growth. In Thermus thermophilus (strain ATCC BAA-163 / DSM 7039 / HB27), this protein is RNA polymerase sigma factor SigA.